We begin with the raw amino-acid sequence, 378 residues long: DNA primase small subunit PriS (378 aa).

Active-site residues include D98, D100, and D282.

It belongs to the eukaryotic-type primase small subunit family. Heterodimer of a small subunit (PriS) and a large subunit (PriL). It depends on Mg(2+) as a cofactor. The cofactor is Mn(2+).

In terms of biological role, catalytic subunit of DNA primase, an RNA polymerase that catalyzes the synthesis of short RNA molecules used as primers for DNA polymerase during DNA replication. The small subunit contains the primase catalytic core and has DNA synthesis activity on its own. Binding to the large subunit stabilizes and modulates the activity, increasing the rate of DNA synthesis while decreasing the length of the DNA fragments, and conferring RNA synthesis capability. The DNA polymerase activity may enable DNA primase to also catalyze primer extension after primer synthesis. May also play a role in DNA repair. This chain is DNA primase small subunit PriS, found in Methanosphaerula palustris (strain ATCC BAA-1556 / DSM 19958 / E1-9c).